The chain runs to 536 residues: Heparanase (536 aa).

Positions 1–28 (MLRPLLLLWLWGRLGALTQGTPAGTAPT) are cleaved as a signal peptide. Heparan sulfate group-binding positions include 55-57 (DAS) and threonine 90. Residues 103–150 (PTSEERSYWQSQDNNDICGSERVSADVLRKLQMEWPFQELLLLREQYQ) constitute a propeptide, linker peptide. Cysteine 120 and cysteine 172 are disulfide-bonded. 151-155 (REFKN) is a heparan sulfate group binding site. N-linked (GlcNAc...) asparagine glycosylation is found at asparagine 155, asparagine 193, and asparagine 210. Glutamate 218 (proton donor) is an active-site residue. Heparan sulfate group-binding positions include 263–273 (QPRGKTVKLLR), histidine 289, and arginine 296. Residues 281–410 (EVIDSLTWHH…LLFKKLVGPK (130 aa)) are required for heterodimerization with the heparanase 8 kDa subunit. The Nucleophile role is filled by glutamate 336. Residues 341–343 (YGG) and 382–384 (GNY) contribute to the heparan sulfate group site. Cysteine 430 and cysteine 535 are oxidised to a cystine. N-linked (GlcNAc...) asparagine glycosylation is present at asparagine 452. The interval 520-536 (FSYGFFVIRNAKIAACI) is required for transferring proheparanase to the Golgi apparatus, secretion and subsequent enzyme activity and for enhancement of PKB/AKT1 phosphorylation.

Belongs to the glycosyl hydrolase 79 family. As to quaternary structure, heterodimer; heterodimer formation between the 8 kDa and the 50 kDa subunits is required for enzyme activity. Interacts with TF; the interaction, inhibited by heparin, enhances the generation of activated factor X and activates coagulation. Interacts with HRG; the interaction is enhanced at acidic pH, partially inhibits binding of HPSE to cell surface receptors and modulates its enzymatic activity. Interacts with SDC1; the interaction enhances the shedding of SDC1. Interacts with HPSE2. Post-translationally, proteolytically processed. The cleavage of the 65 kDa form leads to the generation of a linker peptide, and the 8 kDa and 50 kDa products. The active form, the 8/50 kDa heterodimer, is resistant to degradation. Complete removal of the linker peptide appears to be a prerequisite to the complete activation of the enzyme. In terms of processing, N-glycosylated. Glycosylation of the 50 kDa subunit appears to be essential for its solubility.

The protein localises to the lysosome membrane. Its subcellular location is the secreted. It is found in the nucleus. It carries out the reaction endohydrolysis of (1-&gt;4)-beta-D-glycosidic bonds of heparan sulfate chains in heparan sulfate proteoglycan.. Its activity is regulated as follows. Inhibited by laminarin sulfate and, to a lower extent, by heparin and sulfamin. Activated by calcium and magnesium. Inhibited by EDTA. Endoglycosidase that cleaves heparan sulfate proteoglycans (HSPGs) into heparan sulfate side chains and core proteoglycans. Participates in extracellular matrix (ECM) degradation and remodeling. Selectively cleaves the linkage between a glucuronic acid unit and an N-sulfo glucosamine unit carrying either a 3-O-sulfo or a 6-O-sulfo group. Can also cleave the linkage between a glucuronic acid unit and an N-sulfo glucosamine unit carrying a 2-O-sulfo group, but not linkages between a glucuronic acid unit and a 2-O-sulfated iduronic acid moiety. It is essentially inactive at neutral pH but becomes active under acidic conditions such as during tumor invasion and in inflammatory processes. Facilitates cell migration associated with metastasis, wound healing and inflammation. Enhances shedding of syndecans, and increases endothelial invasion and angiogenesis in myelomas. Acts as a procoagulant by increasing the generation of activation factor X in the presence of tissue factor and activation factor VII. Increases cell adhesion to the extracellular matrix (ECM), independent of its enzymatic activity. Induces AKT1/PKB phosphorylation via lipid rafts increasing cell mobility and invasion. Heparin increases this AKT1/PKB activation. Regulates osteogenesis. Enhances angiogenesis through up-regulation of SRC-mediated activation of VEGF. Implicated in hair follicle inner root sheath differentiation and hair homeostasis. The polypeptide is Heparanase (Hpse) (Rattus norvegicus (Rat)).